The chain runs to 249 residues: MRIDGRKNEQIRHVKVTRHYTKYAEGSVYIEVGDTKVLCNVSIEDKVPPFMKGTGSGWITAEYNMLPRSTETRKIRDIARLKIDGRTMEIQRLIGRALRSVVDLKALGEKTLWIDCDVIQADGGTRTTAISGAFIALVDAVNKLHKIKPFKIYPIRSFVAAVSVGIVNEEKILDLCYQEDSKAKVDMNIIMTDEGSFVEVQGTGEESPYTRAELNELLDLGEKGIKQMINVQKESLKMDSLWIGTGGNN.

Phosphate is bound by residues R86 and G124 to R126.

This sequence belongs to the RNase PH family. As to quaternary structure, homohexameric ring arranged as a trimer of dimers.

The catalysed reaction is tRNA(n+1) + phosphate = tRNA(n) + a ribonucleoside 5'-diphosphate. Phosphorolytic 3'-5' exoribonuclease that plays an important role in tRNA 3'-end maturation. Removes nucleotide residues following the 3'-CCA terminus of tRNAs; can also add nucleotides to the ends of RNA molecules by using nucleoside diphosphates as substrates, but this may not be physiologically important. Probably plays a role in initiation of 16S rRNA degradation (leading to ribosome degradation) during starvation. The protein is Ribonuclease PH of Clostridium botulinum (strain Eklund 17B / Type B).